Here is a 251-residue protein sequence, read N- to C-terminus: 7-cyano-7-deazaguanine synthase (251 aa).

A disordered region spans residues 1–21 (MSDLPRHSPRRQHAGESAVTA). An ATP-binding site is contributed by 35–45 (YSGGMDSYTVL). Zn(2+) contacts are provided by Cys212, Cys220, Cys223, and Cys226.

Belongs to the QueC family. Zn(2+) serves as cofactor.

It catalyses the reaction 7-carboxy-7-deazaguanine + NH4(+) + ATP = 7-cyano-7-deazaguanine + ADP + phosphate + H2O + H(+). The protein operates within purine metabolism; 7-cyano-7-deazaguanine biosynthesis. Catalyzes the ATP-dependent conversion of 7-carboxy-7-deazaguanine (CDG) to 7-cyano-7-deazaguanine (preQ(0)). This is 7-cyano-7-deazaguanine synthase from Chromohalobacter salexigens (strain ATCC BAA-138 / DSM 3043 / CIP 106854 / NCIMB 13768 / 1H11).